Reading from the N-terminus, the 513-residue chain is ATP synthase subunit alpha (513 aa).

An ATP-binding site is contributed by 169–176 (GDRQTGKT).

The protein belongs to the ATPase alpha/beta chains family. F-type ATPases have 2 components, CF(1) - the catalytic core - and CF(0) - the membrane proton channel. CF(1) has five subunits: alpha(3), beta(3), gamma(1), delta(1), epsilon(1). CF(0) has three main subunits: a(1), b(2) and c(9-12). The alpha and beta chains form an alternating ring which encloses part of the gamma chain. CF(1) is attached to CF(0) by a central stalk formed by the gamma and epsilon chains, while a peripheral stalk is formed by the delta and b chains.

Its subcellular location is the cell inner membrane. It catalyses the reaction ATP + H2O + 4 H(+)(in) = ADP + phosphate + 5 H(+)(out). Functionally, produces ATP from ADP in the presence of a proton gradient across the membrane. The alpha chain is a regulatory subunit. In Aliivibrio fischeri (strain ATCC 700601 / ES114) (Vibrio fischeri), this protein is ATP synthase subunit alpha.